Consider the following 408-residue polypeptide: Alpha-2Da adrenergic receptor (408 aa).

Over 1–30 the chain is Extracellular; the sequence is MSVTPTANSTEEAANITASPRLWPYTEPAS. N-linked (GlcNAc...) asparagine glycans are attached at residues Asn-8 and Asn-15. The chain crosses the membrane as a helical span at residues 31 to 55; sequence AIIILVVSLIILLTIVGNVLVIVAV. Residues 56–67 lie on the Cytoplasmic side of the membrane; sequence LTSRALRAPQNL. Residues 68 to 93 traverse the membrane as a helical segment; that stretch reads FLVSLACADILVATLVIPFSLANEIM. Residues 94-103 lie on the Extracellular side of the membrane; sequence GYWYFGSTWC. Cys-103 and Cys-176 are disulfide-bonded. Residues 104 to 126 traverse the membrane as a helical segment; it reads AFYLALDVLFCTSSIVHLCAISL. At 127-147 the chain is on the cytoplasmic side; the sequence is DRYWSVTKAVRYNLKRTPRRI. The helical transmembrane segment at 148–170 threads the bilayer; sequence KCMIAVVWLISAVISFPPLIMTK. Over 171–181 the chain is Extracellular; it reads HDEKECLINDE. The helical transmembrane segment at 182–205 threads the bilayer; the sequence is TWYILSSCAVSFFAPGLIMITVYC. Over 206 to 332 the chain is Cytoplasmic; the sequence is KIYRVAKQRS…QMREKRFTFV (127 aa). A disordered region spans residues 242–306; the sequence is FEKESPSSNS…SCRVSWAAHQ (65 aa). The span at 260–270 shows a compositional bias: acidic residues; the sequence is ELDDIDLEESA. Residues 277–286 are compositionally biased toward basic residues; the sequence is RGSRFSKRRR. The helical transmembrane segment at 333–356 threads the bilayer; that stretch reads LAVVMGVFVLCWFPFFFTYSLQAV. Over 357–369 the chain is Extracellular; the sequence is CGERCGPPEALFK. Residues 370–390 form a helical membrane-spanning segment; the sequence is LFFWIGYCNSSVNPIIYTIFN. Residues 391–408 are Cytoplasmic-facing; it reads RDFRKAFKKVVCWSAQRT.

The protein belongs to the G-protein coupled receptor 1 family. Adrenergic receptor subfamily. ADRA2D sub-subfamily.

It localises to the cell membrane. In terms of biological role, alpha-2 adrenergic receptors mediate the catecholamine-induced inhibition of adenylate cyclase through the action of G proteins. The order of potency for this receptor is dexmedetomidine &gt; norepinephrine &gt; epinephrine &gt; oxymetazoline. The polypeptide is Alpha-2Da adrenergic receptor (adra2da) (Danio rerio (Zebrafish)).